Reading from the N-terminus, the 133-residue chain is CDGSH iron-sulfur domain-containing protein 2 homolog (133 aa).

The Lumenal segment spans residues 1–35 (MQSVSQVVKTSLPNYLSSLPVPDTFGGWFKLSFKD). Residues 36–58 (WLALIPPTAVVVGIGYVTYRAFY) traverse the membrane as a helical segment. The Cytoplasmic segment spans residues 59-133 (PKAHRTCKSG…NVGPIVIKKK (75 aa)). Residues Cys-99, Cys-101, Cys-110, and His-114 each coordinate [2Fe-2S] cluster.

Belongs to the CISD protein family. CISD2 subfamily. [2Fe-2S] cluster serves as cofactor.

Its subcellular location is the endoplasmic reticulum membrane. The polypeptide is CDGSH iron-sulfur domain-containing protein 2 homolog (Drosophila virilis (Fruit fly)).